The following is a 257-amino-acid chain: MPVLTMKQLLEAGVHFGHQTRRWNPKMAEYIFTERNGIYIIDLQKTVKKMDEAYEFVKSQVAEGKIVLFVGTKKQAQETIKEEAERCGMFYINQRWLGGLLTNFRTIKTRIERLKELQRMEEDGTFEVLPKKEVNLLRKEKERLLKYLGGIQNMPRIPDILYIVDPRKERNAVLEARKLGIPIVAIVDTNCDPDEIDYVIPGNDDAIRAVKLITSKIADAVIEGREGEQFTPATTSSQEVDKASEQVEIAADDIDEE.

Residues 229-257 (QFTPATTSSQEVDKASEQVEIAADDIDEE) are disordered.

The protein belongs to the universal ribosomal protein uS2 family.

This is Small ribosomal subunit protein uS2 from Caldicellulosiruptor bescii (strain ATCC BAA-1888 / DSM 6725 / KCTC 15123 / Z-1320) (Anaerocellum thermophilum).